Consider the following 692-residue polypeptide: Polyribonucleotide nucleotidyltransferase (692 aa).

Mg(2+)-binding residues include D484 and D490. Residues 551–610 enclose the KH domain; sequence PRIITIQINPDRIRDVIGPGGKVIRALTEETGATIDIQDNGTVTIASVDGEAGAAAKRRI. In terms of domain architecture, S1 motif spans 620 to 688; it reads DTIYDGKVAK…RQGKIKLSMK (69 aa).

This sequence belongs to the polyribonucleotide nucleotidyltransferase family. In terms of assembly, component of the RNA degradosome, which is a multiprotein complex involved in RNA processing and mRNA degradation. The cofactor is Mg(2+).

Its subcellular location is the cytoplasm. The enzyme catalyses RNA(n+1) + phosphate = RNA(n) + a ribonucleoside 5'-diphosphate. Involved in mRNA degradation. Catalyzes the phosphorolysis of single-stranded polyribonucleotides processively in the 3'- to 5'-direction. This chain is Polyribonucleotide nucleotidyltransferase, found in Acidithiobacillus ferrooxidans (strain ATCC 53993 / BNL-5-31) (Leptospirillum ferrooxidans (ATCC 53993)).